Reading from the N-terminus, the 355-residue chain is Protein DVR-1 (355 aa).

The first 15 residues, 1 to 15 (MFLVLLRACLLTLSL), serve as a signal peptide directing secretion. A propeptide spanning residues 16–240 (CSPAEDDGLV…PLQCRSRRKR (225 aa)) is cleaved from the precursor. Asn-108, Asn-179, and Asn-296 each carry an N-linked (GlcNAc...) asparagine glycan. Intrachain disulfides connect Cys-254–Cys-320, Cys-283–Cys-352, and Cys-287–Cys-354.

This sequence belongs to the TGF-beta family. In terms of assembly, homodimer. In terms of tissue distribution, abundant in ovaries and eggs, and equally distributed among all blastomeres.

Its subcellular location is the secreted. Its function is as follows. Serves to facilitate the differentiation of either mesoderm or endoderm either as a cofactor in an instructive signal or by providing permissive environment. The sequence is that of Protein DVR-1 (dvr1) from Danio rerio (Zebrafish).